Consider the following 739-residue polypeptide: MKEMSANTMLDSQRQQKHYGITSPISLACPKEIDHIYTQKLIDAMKPFGVFEDEEELNHRLVVLGKLNNLVKEWISDISESKNLPPSVVATVGGKIFTFGSYRLGVHTKGADIDALCVAPRHVERSDFFQSFFEKLKHQDGIRNLRAVEDAFVPVIKFEFDGIEIDLVFARLAIQTISDNLDLRDDSRLRSLDIRCIRSLNGCRVTDEILHLVPNKETFRLTLRAVKLWAKRRGIYSNMLGFLGGVSWAMLVARTCQLYPNAAASTLVHKFFLVFSKWEWPNPVLLKQPEESNLNLPVWDPRVNPSDRYHLMPIITPAYPQQNSTYNVSTSTRTVMVEEFKQGLAVTDEILQGKSDWSKLLEPPNFFQKYRHYIVLTASASTEENHLEWVGLVESKIRVLVGNLERNEFITLAHVNPQSFPGNKEHHKANNYVSMWFLGIIFRRVENAESVNIDLTYDIQSFTDTVYRQANNINMLKDGMKIEATHVKKKQLHHYLPAEILQKKKKSLSDVSRSSGGLQSKRSSLDSTCLDSSRDTDSGTPFNSPVSANKPSNPDSPTGEIERSSAEPVAVVVEKLPSVPPAQGLSIPVIGAKVDPTAKAVSSPAVCTIPTVVGRNVIPRITTPHNPVQGQPHLNGISNITKNVTPKRSHSPPTDGTSKRLKDIEKFIRLESAFKESRAAEDRKRKPMDSIGGESMPIPTIDTARKKRLPSKELPDSSSPVPANNIRVIKNSIRLTLNR.

An N6-acetyllysine modification is found at K2. At S23 the chain carries Phosphoserine. Residues F99–S101, T108, D112–D114, D166, K227, Y236, and G245–V246 contribute to the ATP site. Positions 112, 114, and 166 each coordinate Mg(2+). The interval K506–A566 is disordered. 2 stretches are compositionally biased toward polar residues: residues S509–D531 and S538–S556. A Phosphoserine modification is found at S524. Phosphoserine occurs at positions 602 and 651. T657 is subject to Phosphothreonine. Residues S677–M688 are compositionally biased toward basic and acidic residues. The interval S677 to N725 is disordered. Position 711 is a phosphoserine (S711).

Belongs to the poly(A) polymerase family. Mg(2+) serves as cofactor. The cofactor is Mn(2+).

It is found in the nucleus. It carries out the reaction RNA(n) + ATP = RNA(n)-3'-adenine ribonucleotide + diphosphate. Responsible for the post-transcriptional adenylation of the 3'-terminal of mRNA precursors and several small RNAs including signal recognition particle (SRP) RNA, nuclear 7SK RNA, U2 small nuclear RNA, and ribosomal 5S RNA. This is Poly(A) polymerase gamma (Papolg) from Mus musculus (Mouse).